The sequence spans 219 residues: Ribose-5-phosphate isomerase A (219 aa).

Substrate-binding positions include 28 to 31, 81 to 84, and 94 to 97; these read TGST, DGAD, and KGGG. The Proton acceptor role is filled by glutamate 103. Residue lysine 121 participates in substrate binding.

It belongs to the ribose 5-phosphate isomerase family. In terms of assembly, homodimer.

The catalysed reaction is aldehydo-D-ribose 5-phosphate = D-ribulose 5-phosphate. Its pathway is carbohydrate degradation; pentose phosphate pathway; D-ribose 5-phosphate from D-ribulose 5-phosphate (non-oxidative stage): step 1/1. In terms of biological role, catalyzes the reversible conversion of ribose-5-phosphate to ribulose 5-phosphate. This chain is Ribose-5-phosphate isomerase A, found in Escherichia fergusonii (strain ATCC 35469 / DSM 13698 / CCUG 18766 / IAM 14443 / JCM 21226 / LMG 7866 / NBRC 102419 / NCTC 12128 / CDC 0568-73).